The sequence spans 571 residues: Proline--tRNA ligase (571 aa).

It belongs to the class-II aminoacyl-tRNA synthetase family. ProS type 1 subfamily. In terms of assembly, homodimer.

The protein localises to the cytoplasm. It catalyses the reaction tRNA(Pro) + L-proline + ATP = L-prolyl-tRNA(Pro) + AMP + diphosphate. In terms of biological role, catalyzes the attachment of proline to tRNA(Pro) in a two-step reaction: proline is first activated by ATP to form Pro-AMP and then transferred to the acceptor end of tRNA(Pro). As ProRS can inadvertently accommodate and process non-cognate amino acids such as alanine and cysteine, to avoid such errors it has two additional distinct editing activities against alanine. One activity is designated as 'pretransfer' editing and involves the tRNA(Pro)-independent hydrolysis of activated Ala-AMP. The other activity is designated 'posttransfer' editing and involves deacylation of mischarged Ala-tRNA(Pro). The misacylated Cys-tRNA(Pro) is not edited by ProRS. The protein is Proline--tRNA ligase of Pseudomonas putida (strain ATCC 47054 / DSM 6125 / CFBP 8728 / NCIMB 11950 / KT2440).